A 736-amino-acid chain; its full sequence is 1,4-alpha-glucan branching enzyme GlgB (736 aa).

Asp415 functions as the Nucleophile in the catalytic mechanism. Glu470 serves as the catalytic Proton donor.

Belongs to the glycosyl hydrolase 13 family. GlgB subfamily. As to quaternary structure, monomer.

The enzyme catalyses Transfers a segment of a (1-&gt;4)-alpha-D-glucan chain to a primary hydroxy group in a similar glucan chain.. Its pathway is glycan biosynthesis; glycogen biosynthesis. Functionally, catalyzes the formation of the alpha-1,6-glucosidic linkages in glycogen by scission of a 1,4-alpha-linked oligosaccharide from growing alpha-1,4-glucan chains and the subsequent attachment of the oligosaccharide to the alpha-1,6 position. This Burkholderia cenocepacia (strain HI2424) protein is 1,4-alpha-glucan branching enzyme GlgB.